A 67-amino-acid chain; its full sequence is KDGYPVEVTGCKKSCYKLGENKFCNRECKMKHRGGSYGYCYFFGCYCEGLAESTPTWPLPNKSCGKK.

An LCN-type CS-alpha/beta domain is found at 1 to 65 (KDGYPVEVTG…TWPLPNKSCG (65 aa)). Cystine bridges form between C11–C64, C15–C40, C24–C45, and C28–C47. C64 is modified (cysteine amide). A propeptide spanning residues 65–67 (GKK) is cleaved from the precursor.

The protein belongs to the long (4 C-C) scorpion toxin superfamily. Sodium channel inhibitor family. Beta subfamily. Expressed by the venom gland.

Its subcellular location is the secreted. In terms of biological role, beta toxins bind voltage-independently at site-4 of sodium channels (Nav) and shift the voltage of activation toward more negative potentials thereby affecting sodium channel activation and promoting spontaneous and repetitive firing. This is Neurotoxin Cex9 from Centruroides exilicauda (Bark scorpion).